The primary structure comprises 399 residues: Protein HYM1 (399 aa).

The segment covering 363-382 (VSNNNASSSNVASITSPSSV) has biased composition (low complexity). The segment at 363 to 399 (VSNNNASSSNVASITSPSSVMNNQSSILTHSTSPDSR) is disordered. Over residues 383–399 (MNNQSSILTHSTSPDSR) the composition is skewed to polar residues.

This sequence belongs to the Mo25 family.

The polypeptide is Protein HYM1 (HYM1) (Saccharomyces cerevisiae (strain ATCC 204508 / S288c) (Baker's yeast)).